Consider the following 300-residue polypeptide: Haloalkane dehalogenase (300 aa).

In terms of domain architecture, AB hydrolase-1 spans 32–155 (AIVFQHGNPT…PAVRGVFQGF (124 aa)). Catalysis depends on Asp-109, which acts as the Nucleophile. Glu-133 (proton donor) is an active-site residue. The active-site Proton acceptor is His-273.

This sequence belongs to the haloalkane dehalogenase family. Type 2 subfamily. In terms of assembly, monomer.

It catalyses the reaction 1-haloalkane + H2O = a halide anion + a primary alcohol + H(+). Catalyzes hydrolytic cleavage of carbon-halogen bonds in halogenated aliphatic compounds, leading to the formation of the corresponding primary alcohols, halide ions and protons. The sequence is that of Haloalkane dehalogenase from Mycobacterium bovis (strain ATCC BAA-935 / AF2122/97).